The following is a 757-amino-acid chain: Neutral ceramidase 2 (757 aa).

A signal peptide spans 1–25; sequence MAVSLPLFQFILFLLLLLLSRTVYA. Asparagine 311 is a glycosylation site (N-linked (GlcNAc...) asparagine). Serine 330 functions as the Nucleophile in the catalytic mechanism. 2 N-linked (GlcNAc...) asparagine glycosylation sites follow: asparagine 348 and asparagine 657.

It belongs to the neutral ceramidase family.

The protein resides in the secreted. It is found in the endoplasmic reticulum. It localises to the golgi apparatus. It catalyses the reaction an N-acylsphing-4-enine + H2O = sphing-4-enine + a fatty acid. Hydrolyzes the sphingolipid ceramide into sphingosine and free fatty acid. This chain is Neutral ceramidase 2, found in Arabidopsis thaliana (Mouse-ear cress).